The following is a 508-amino-acid chain: Probable glycine dehydrogenase (decarboxylating) subunit 2 (508 aa).

Residue lysine 277 is modified to N6-(pyridoxal phosphate)lysine.

It belongs to the GcvP family. C-terminal subunit subfamily. In terms of assembly, the glycine cleavage system is composed of four proteins: P, T, L and H. In this organism, the P 'protein' is a heterodimer of two subunits. Pyridoxal 5'-phosphate is required as a cofactor.

The catalysed reaction is N(6)-[(R)-lipoyl]-L-lysyl-[glycine-cleavage complex H protein] + glycine + H(+) = N(6)-[(R)-S(8)-aminomethyldihydrolipoyl]-L-lysyl-[glycine-cleavage complex H protein] + CO2. Functionally, the glycine cleavage system catalyzes the degradation of glycine. The P protein binds the alpha-amino group of glycine through its pyridoxal phosphate cofactor; CO(2) is released and the remaining methylamine moiety is then transferred to the lipoamide cofactor of the H protein. This is Probable glycine dehydrogenase (decarboxylating) subunit 2 from Saccharolobus solfataricus (strain ATCC 35092 / DSM 1617 / JCM 11322 / P2) (Sulfolobus solfataricus).